The chain runs to 147 residues: Large ribosomal subunit protein bL9 (147 aa).

It belongs to the bacterial ribosomal protein bL9 family.

Its function is as follows. Binds to the 23S rRNA. The sequence is that of Large ribosomal subunit protein bL9 from Clostridium botulinum (strain Alaska E43 / Type E3).